The following is a 501-amino-acid chain: Cilia- and flagella-associated protein 45 (501 aa).

A coiled-coil region spans residues 75–114 (MTAEDVAAAKREAEAKREQLQAVSKARKEKMLKLEEEAKK).

This sequence belongs to the CFAP45 family.

It localises to the cell projection. It is found in the cilium. The protein localises to the flagellum. The chain is Cilia- and flagella-associated protein 45 from Chlamydomonas reinhardtii (Chlamydomonas smithii).